The chain runs to 361 residues: ETS translocation variant 3-like protein (361 aa).

The segment at residues Ile-39–Asn-120 is a DNA-binding region (ETS). Positions Leu-178 to Val-201 are disordered.

It belongs to the ETS family.

It is found in the nucleus. In terms of biological role, transcriptional regulator. The chain is ETS translocation variant 3-like protein (ETV3L) from Homo sapiens (Human).